A 351-amino-acid chain; its full sequence is CREB homolog crh-2 (351 aa).

2 disordered regions span residues 46-104 (EPCT…EPLG) and 119-149 (SPSA…HQQQ). The span at 82-95 (GSSSGSPSSSLSSP) shows a compositional bias: low complexity. A bZIP domain is found at 282–345 (SLKIVRRKIK…RDLQQKLHQY (64 aa)). The tract at residues 284–304 (KIVRRKIKNKLSAQESRRKRK) is basic motif. Positions 307-314 (IDALEGRL) are leucine-zipper.

Belongs to the bZIP family.

It is found in the nucleus. In terms of biological role, transcription factor. Plays a role in regulating the developmentally arrested larval state known as dauer, when induced by long-term exposure to the Gram-negative bacterium P.aeruginosa PAO1, but dispensable for dauer formation induced by starvation. Involved in regulating expression of microRNA mir-243, during long-term exposure to P.aeruginosa PAO1. The polypeptide is CREB homolog crh-2 (Caenorhabditis elegans).